We begin with the raw amino-acid sequence, 210 residues long: Ribosomal RNA small subunit methyltransferase G (210 aa).

Residues G75, F80, 98–100 (EST), 126–127 (AE), and R141 contribute to the S-adenosyl-L-methionine site.

Belongs to the methyltransferase superfamily. RNA methyltransferase RsmG family.

The protein localises to the cytoplasm. Specifically methylates the N7 position of a guanine in 16S rRNA. In Solibacter usitatus (strain Ellin6076), this protein is Ribosomal RNA small subunit methyltransferase G.